The following is a 468-amino-acid chain: 3-isopropylmalate dehydratase large subunit (468 aa).

The [4Fe-4S] cluster site is built by C347, C407, and C410.

Belongs to the aconitase/IPM isomerase family. LeuC type 1 subfamily. As to quaternary structure, heterodimer of LeuC and LeuD. [4Fe-4S] cluster is required as a cofactor.

It catalyses the reaction (2R,3S)-3-isopropylmalate = (2S)-2-isopropylmalate. The protein operates within amino-acid biosynthesis; L-leucine biosynthesis; L-leucine from 3-methyl-2-oxobutanoate: step 2/4. Functionally, catalyzes the isomerization between 2-isopropylmalate and 3-isopropylmalate, via the formation of 2-isopropylmaleate. The protein is 3-isopropylmalate dehydratase large subunit of Synechocystis sp. (strain ATCC 27184 / PCC 6803 / Kazusa).